Consider the following 227-residue polypeptide: Cytochrome c oxidase subunit 2 (227 aa).

Residues 1–14 lie on the Mitochondrial intermembrane side of the membrane; the sequence is MAYPFQLGFQDATS. Residues 15 to 45 traverse the membrane as a helical segment; the sequence is PIMEELLHFHDHTLMIVFLISSLVLYIISSM. The Mitochondrial matrix portion of the chain corresponds to 46-59; sequence LTTKLTHTSTMDAQ. The helical transmembrane segment at 60–87 threads the bilayer; it reads EVETIWTILPAIILILIALPSLRILYMM. At 88-227 the chain is on the mitochondrial intermembrane side; the sequence is DEINNPSLTV…YFEEWSASML (140 aa). His-161, Cys-196, Glu-198, Cys-200, His-204, and Met-207 together coordinate Cu cation. Mg(2+) is bound at residue Glu-198.

The protein belongs to the cytochrome c oxidase subunit 2 family. As to quaternary structure, component of the cytochrome c oxidase (complex IV, CIV), a multisubunit enzyme composed of 14 subunits. The complex is composed of a catalytic core of 3 subunits MT-CO1, MT-CO2 and MT-CO3, encoded in the mitochondrial DNA, and 11 supernumerary subunits COX4I, COX5A, COX5B, COX6A, COX6B, COX6C, COX7A, COX7B, COX7C, COX8 and NDUFA4, which are encoded in the nuclear genome. The complex exists as a monomer or a dimer and forms supercomplexes (SCs) in the inner mitochondrial membrane with NADH-ubiquinone oxidoreductase (complex I, CI) and ubiquinol-cytochrome c oxidoreductase (cytochrome b-c1 complex, complex III, CIII), resulting in different assemblies (supercomplex SCI(1)III(2)IV(1) and megacomplex MCI(2)III(2)IV(2)). Found in a complex with TMEM177, COA6, COX18, COX20, SCO1 and SCO2. Interacts with TMEM177 in a COX20-dependent manner. Interacts with COX20. Interacts with COX16. It depends on Cu cation as a cofactor.

The protein resides in the mitochondrion inner membrane. The catalysed reaction is 4 Fe(II)-[cytochrome c] + O2 + 8 H(+)(in) = 4 Fe(III)-[cytochrome c] + 2 H2O + 4 H(+)(out). In terms of biological role, component of the cytochrome c oxidase, the last enzyme in the mitochondrial electron transport chain which drives oxidative phosphorylation. The respiratory chain contains 3 multisubunit complexes succinate dehydrogenase (complex II, CII), ubiquinol-cytochrome c oxidoreductase (cytochrome b-c1 complex, complex III, CIII) and cytochrome c oxidase (complex IV, CIV), that cooperate to transfer electrons derived from NADH and succinate to molecular oxygen, creating an electrochemical gradient over the inner membrane that drives transmembrane transport and the ATP synthase. Cytochrome c oxidase is the component of the respiratory chain that catalyzes the reduction of oxygen to water. Electrons originating from reduced cytochrome c in the intermembrane space (IMS) are transferred via the dinuclear copper A center (CU(A)) of subunit 2 and heme A of subunit 1 to the active site in subunit 1, a binuclear center (BNC) formed by heme A3 and copper B (CU(B)). The BNC reduces molecular oxygen to 2 water molecules using 4 electrons from cytochrome c in the IMS and 4 protons from the mitochondrial matrix. This Equus asinus (Donkey) protein is Cytochrome c oxidase subunit 2 (MT-CO2).